We begin with the raw amino-acid sequence, 60 residues long: Sec-independent protein translocase protein TatA (60 aa).

A helical transmembrane segment spans residues 1 to 21; it reads MTPAGPAQLLIVALVVIVLFG.

The protein belongs to the TatA/E family. As to quaternary structure, the Tat system comprises two distinct complexes: a TatABC complex, containing multiple copies of TatA, TatB and TatC subunits, and a separate TatA complex, containing only TatA subunits. Substrates initially bind to the TatABC complex, which probably triggers association of the separate TatA complex to form the active translocon.

It is found in the cell membrane. Its function is as follows. Part of the twin-arginine translocation (Tat) system that transports large folded proteins containing a characteristic twin-arginine motif in their signal peptide across membranes. TatA could form the protein-conducting channel of the Tat system. The polypeptide is Sec-independent protein translocase protein TatA (Corynebacterium glutamicum (strain R)).